The chain runs to 512 residues: Plastidal glycolate/glycerate translocator 1, chloroplastic (512 aa).

Residues 1-76 (MATLLATPIF…MNFERKLSVQ (76 aa)) constitute a chloroplast transit peptide. At Ala-77 the chain carries N-acetylalanine. 12 consecutive transmembrane segments (helical) span residues 93–113 (VIAI…DYFL), 127–147 (ALFG…VVPA), 160–180 (FLFI…VLPL), 195–215 (YIVA…AIAV), 238–258 (LELW…LFYP), 270–290 (PFLL…PSSI), 293–313 (VFHP…AFGY), 336–356 (AGDI…FSMF), 367–387 (AEIF…TALV), 398–418 (TVSI…VSLF), 425–445 (LTAA…QVVL), and 480–500 (LPFC…LCSV).

Belongs to the CidB/LrgB family. Expressed in leaves, stems and flowers, but not in roots.

It localises to the plastid. Its subcellular location is the chloroplast membrane. Functionally, glycolate/glycerate transporter required for photorespiration. This chain is Plastidal glycolate/glycerate translocator 1, chloroplastic (PLGG1), found in Arabidopsis thaliana (Mouse-ear cress).